The sequence spans 361 residues: Bis(monoacylglycero)phosphate synthase CLN5 (361 aa).

Over residues 1–21 the composition is skewed to gly residues; the sequence is MAQAGGAGAGAWGRRGAGAGA. Residues 1 to 24 form a disordered region; sequence MAQAGGAGAGAWGRRGAGAGAGPE. At 1-30 the chain is on the cytoplasmic side; it reads MAQAGGAGAGAWGRRGAGAGAGPERAPWRW. A helical; Signal-anchor for type II membrane protein membrane pass occupies residues 31–48; sequence APALLWLAAATAAAAAAG. Over 49-361 the chain is Lumenal; that stretch reads DPSRRQWPVP…NRKNRTLSGL (313 aa). 2 cysteine pairs are disulfide-bonded: cysteine 72-cysteine 161 and cysteine 79-cysteine 167. Catalysis depends on histidine 119, which acts as the Proton acceptor. Residues asparagine 132, asparagine 145, asparagine 180, and asparagine 205 are each glycosylated (N-linked (GlcNAc...) asparagine). Catalysis depends on cysteine 233, which acts as the Nucleophile; Acyl-thioester intermediate. N-linked (GlcNAc...) asparagine glycosylation is found at asparagine 257, asparagine 273, and asparagine 283. Residues 306-345 are membrane-anchoring; it reads FLLSLLQIFDAVVIHREFYLFYNFEYWFLPMKSPFIKITY. N-linked (GlcNAc...) asparagine glycosylation is present at asparagine 355.

This sequence belongs to the CLN5 family. In terms of assembly, multimer. Interacts with SORT1, RAB5A and RAB7A. Interacts with PPT1, TPP1, CLN3, CLN6, CLN8, ATP5F1A and ATP5F1B. In terms of processing, N-glycosylated with both high mannose and complex type sugars. Glycosylation is important for proper folding and trafficking to the lysosomes. Post-translationally, the type II membrane signal anchor is proteolytically cleaved to produce a mature form that is transported to the lysosomes (Bis(monoacylglycero)phosphate synthase CLN5, secreted form). Can undergo proteolytic cleavage at the C-terminus, probably by a cysteine protease and may involve the removal of approximately 10-15 residues from the C-terminal end.

It is found in the lysosome. Its subcellular location is the membrane. The catalysed reaction is S-hexadecanoyl-L-cysteinyl-[protein] + H2O = L-cysteinyl-[protein] + hexadecanoate + H(+). It catalyses the reaction 2 1-acyl-sn-glycero-3-phospho-(1'-sn-glycerol) = 1-acyl-sn-glycero-3-phospho-(3'-acyl-sn-1'-glycerol) + sn-glycero-3-phospho-(1'-sn-glycerol). The enzyme catalyses 2 1-(9Z-octadecenoyl)-sn-glycero-3-phospho-(1'-sn-glycerol) = 1-(9Z-octadecenoyl)-sn-glycero-3-phospho-(3'-(9Z-octadecenoyl)-1'-sn-glycerol) + sn-glycero-3-phospho-(1'-sn-glycerol). It carries out the reaction 2 1-octadecanoyl-sn-glycero-3-phospho-(1'-sn-glycerol) = 1-octadecanoyl-sn-glycero-3-phospho-(3'-octadecanoyl-1'-sn-glycerol) + sn-glycero-3-phospho-(1'-sn-glycerol). The catalysed reaction is 2 1-hexadecanoyl-sn-glycero-3-phospho-(1'-sn-glycerol) = 1-hexadecanoyl-sn-glycero-3-phospho-(3'-hexadecanoyl-1'-sn-glycerol) + sn-glycero-3-phospho-(1'-sn-glycerol). It catalyses the reaction 2 1-tetradecanoyl-sn-glycero-3-phospho-(1'-sn-glycerol) = 1-tetradecanoyl-sn-glycero-3-phospho-(3'-tetradecanoyl-1'-sn-glycerol) + sn-glycero-3-phospho-(1'-sn-glycerol). Functionally, catalyzes the synthesis of bis(monoacylglycero)phosphate (BMP) via transacylation of 2 molecules of lysophosphatidylglycerol (LPG). BMP also known as lysobisphosphatidic acid plays a key role in the formation of intraluminal vesicles and in maintaining intracellular cholesterol homeostasis. Can use only LPG as the exclusive lysophospholipid acyl donor for base exchange and displays BMP synthase activity towards various LPGs (LPG 14:0, LPG 16:0, LPG 18:0, LPG 18:1) with a higher preference for longer chain lengths. Plays a role in influencing the retrograde trafficking of lysosomal sorting receptors SORT1 and IGF2R from the endosomes to the trans-Golgi network by controlling the recruitment of retromer complex to the endosomal membrane. Regulates the localization and activation of RAB7A which is required to recruit the retromer complex to the endosomal membrane. Exhibits palmitoyl protein thioesterase (S-depalmitoylation) activity in vitro and most likely plays a role in protein S-depalmitoylation. The chain is Bis(monoacylglycero)phosphate synthase CLN5 (CLN5) from Ovis aries (Sheep).